The sequence spans 89 residues: Large ribosomal subunit protein eL37A (89 aa).

Residues cysteine 19, cysteine 22, cysteine 34, and cysteine 37 each coordinate Zn(2+). Residues 19–37 form a C4-type zinc finger; it reads CRRCGKRSFHIQKSTCACC.

The protein belongs to the eukaryotic ribosomal protein eL37 family. As to quaternary structure, component of the large ribosomal subunit (LSU). Mature yeast ribosomes consist of a small (40S) and a large (60S) subunit. The 40S small subunit contains 1 molecule of ribosomal RNA (18S rRNA) and at least 33 different proteins. The large 60S subunit contains 3 rRNA molecules (25S, 5.8S and 5S rRNA) and at least 46 different proteins. Zn(2+) serves as cofactor.

It localises to the cytoplasm. In terms of biological role, component of the ribosome, a large ribonucleoprotein complex responsible for the synthesis of proteins in the cell. The small ribosomal subunit (SSU) binds messenger RNAs (mRNAs) and translates the encoded message by selecting cognate aminoacyl-transfer RNA (tRNA) molecules. The large subunit (LSU) contains the ribosomal catalytic site termed the peptidyl transferase center (PTC), which catalyzes the formation of peptide bonds, thereby polymerizing the amino acids delivered by tRNAs into a polypeptide chain. The nascent polypeptides leave the ribosome through a tunnel in the LSU and interact with protein factors that function in enzymatic processing, targeting, and the membrane insertion of nascent chains at the exit of the ribosomal tunnel. The protein is Large ribosomal subunit protein eL37A (rpl3703) of Schizosaccharomyces pombe (strain 972 / ATCC 24843) (Fission yeast).